A 67-amino-acid chain; its full sequence is DNA-directed RNA polymerase subunit omega (67 aa).

Belongs to the RNA polymerase subunit omega family. The RNAP catalytic core consists of 2 alpha, 1 beta, 1 beta' and 1 omega subunit. When a sigma factor is associated with the core the holoenzyme is formed, which can initiate transcription.

It carries out the reaction RNA(n) + a ribonucleoside 5'-triphosphate = RNA(n+1) + diphosphate. In terms of biological role, promotes RNA polymerase assembly. Latches the N- and C-terminal regions of the beta' subunit thereby facilitating its interaction with the beta and alpha subunits. The sequence is that of DNA-directed RNA polymerase subunit omega from Bordetella pertussis (strain Tohama I / ATCC BAA-589 / NCTC 13251).